Reading from the N-terminus, the 126-residue chain is MSTTRRRRPALIALVIIATCGCLALGWWQWTRFQSTSGTFQNLGYALQWPLFAWFCVYAYRNFVRYEETPPQPPTGGAAAEIPAGLLPERPKPAQQPPDDPVLREYNAYLAELAKDDARKQNRTTA.

The N-terminal stretch at 1 to 21 (MSTTRRRRPALIALVIIATCG) is a signal peptide. C22 carries the N-palmitoyl cysteine lipid modification. C22 carries S-diacylglycerol cysteine lipidation. Residues 40 to 60 (FQNLGYALQWPLFAWFCVYAY) form a helical membrane-spanning segment. The segment at 70-101 (PPQPPTGGAAAEIPAGLLPERPKPAQQPPDDP) is disordered.

To M.leprae ML1177.

The protein resides in the cell membrane. This Mycobacterium tuberculosis (strain CDC 1551 / Oshkosh) protein is Putative lipoprotein LprD (lprD).